The chain runs to 251 residues: UPF0246 protein DSY0297 (251 aa).

It belongs to the UPF0246 family.

This is UPF0246 protein DSY0297 from Desulfitobacterium hafniense (strain Y51).